The following is a 476-amino-acid chain: Glutamate--tRNA ligase (476 aa).

Residues 8-18 (PSPTGTLHIGT) carry the 'HIGH' region motif. A 'KMSKS' region motif is present at residues 247 to 251 (KLSKR). Lysine 250 is a binding site for ATP.

The protein belongs to the class-I aminoacyl-tRNA synthetase family. Glutamate--tRNA ligase type 1 subfamily. In terms of assembly, monomer.

The protein localises to the cytoplasm. The catalysed reaction is tRNA(Glu) + L-glutamate + ATP = L-glutamyl-tRNA(Glu) + AMP + diphosphate. Catalyzes the attachment of glutamate to tRNA(Glu) in a two-step reaction: glutamate is first activated by ATP to form Glu-AMP and then transferred to the acceptor end of tRNA(Glu). The sequence is that of Glutamate--tRNA ligase from Synechococcus sp. (strain WH7803).